Here is a 140-residue protein sequence, read N- to C-terminus: MITLNQIKDRKARGSKKKRKTLLTGYPQKKGFCVKVYVTKPKKPNSAIRKVAKVTIRLKNKRKNLIAYIPGFGPHNLQPLSTVLIKGGRCQDLPGVKYRLVRKHYDFQIAERFPRKNRRSKFSVKNEKLKAKKGTAVRIG.

The protein belongs to the universal ribosomal protein uS12 family.

The protein localises to the mitochondrion. The polypeptide is Small ribosomal subunit protein uS12m (mrps12) (Dictyostelium citrinum (Slime mold)).